A 228-amino-acid polypeptide reads, in one-letter code: Ribonuclease 3 (228 aa).

The RNase III domain occupies 7-132; sequence LSAFMDRLGH…VIAAVYLDAG (126 aa). Residue Glu45 participates in Mg(2+) binding. Asp49 is an active-site residue. Mg(2+) contacts are provided by Asp118 and Glu121. Glu121 is an active-site residue. The DRBM domain maps to 157–226; that stretch reads DPKTALQEWA…AKALLERLER (70 aa).

It belongs to the ribonuclease III family. As to quaternary structure, homodimer. Requires Mg(2+) as cofactor.

It localises to the cytoplasm. It carries out the reaction Endonucleolytic cleavage to 5'-phosphomonoester.. Functionally, digests double-stranded RNA. Involved in the processing of ribosomal RNA precursors and of some mRNAs. Complements an E.coli disruption mutant, but the E.coli enzyme does not cleave R.capsulatus rRNA precursor, showing substrate recognition is different. Probably also processes some mRNAs, and tRNAs when they are encoded in the rRNA operon. Probably processes pre-crRNA and tracrRNA of type II CRISPR loci if present in the organism. In Rhodobacter capsulatus (Rhodopseudomonas capsulata), this protein is Ribonuclease 3 (rnc).